Here is a 261-residue protein sequence, read N- to C-terminus: 4-hydroxy-tetrahydrodipicolinate reductase (261 aa).

Gly9–Met14 provides a ligand contact to NAD(+). Position 36 (Arg36) interacts with NADP(+). NAD(+)-binding positions include Gly97 to Thr99 and Ser118 to Met121. His151 serves as the catalytic Proton donor/acceptor. His152 is a binding site for (S)-2,3,4,5-tetrahydrodipicolinate. Lys155 functions as the Proton donor in the catalytic mechanism. Residue Gly161–Thr162 coordinates (S)-2,3,4,5-tetrahydrodipicolinate.

It belongs to the DapB family.

It localises to the cytoplasm. The catalysed reaction is (S)-2,3,4,5-tetrahydrodipicolinate + NAD(+) + H2O = (2S,4S)-4-hydroxy-2,3,4,5-tetrahydrodipicolinate + NADH + H(+). It catalyses the reaction (S)-2,3,4,5-tetrahydrodipicolinate + NADP(+) + H2O = (2S,4S)-4-hydroxy-2,3,4,5-tetrahydrodipicolinate + NADPH + H(+). The protein operates within amino-acid biosynthesis; L-lysine biosynthesis via DAP pathway; (S)-tetrahydrodipicolinate from L-aspartate: step 4/4. Functionally, catalyzes the conversion of 4-hydroxy-tetrahydrodipicolinate (HTPA) to tetrahydrodipicolinate. The polypeptide is 4-hydroxy-tetrahydrodipicolinate reductase (Wolbachia pipientis wMel).